The sequence spans 913 residues: MKDSENKGASSPDMEPSYGGGLFDMVKGGAGRLFSNLKDNLKDTLKDTSSRVIQSVTSYTKGDLDFTYVTSRIIVMSFPLDNVDIGFRNQVDDIRSFLDSRHLDHYTVYNLSPKSYRTAKFHSRVSECSWPIRQAPSLHNLFAVCRNMYNWLLQNPKNVCVVHCLDGRAASSILVGAMFIFCNLYSTPGPAIRLLYAKRPGIGLSPSHRRYLGYMCDLLADKPYRPHFKPLTIKSITVSPIPFFNKQRNGCRPYCDVLIGETKIYSTCTDFERMKEYRVQDGKIFIPLNITVQGDVVVSMYHLRSTIGSRLQAKVTNTQIFQLQFHTGFIPLDTTVLKFTKPELDACDVPEKYPQLFQVTLDVELQPHDKVIDLTPPWEHYCTKDVNPSILFSSHQEHQDTLALGGQAPIDIPPDNPRHYGQSGFFASLCWQDQKSEKSFCEEDHAALVNQESEQSDDELLTLSSPHGNANGDKPHGVKKPSKKQQEPAAPPPPEDVDLLGLEGSAMSNSFSPPAAPPTNSELLSDLFGGGGAAGPTQAGQSGVEDVFHPSGPASTQSTPRRSATSTSASPTLRVGEGATFDPFGAPSKPSGQDLLGSFLNTSSASSDPFLQPTRSPSPTVHASSTPAVNIQPDVSGGWDWHAKPGGFGMGSKSAATSPTGSSHGTPTHQSKPQTLDPFADLGTLGSSSFASKPTTPTGLGGGFPPLSSPQKASPQPMGGGWQQGGAYNWQQPQPKPQPSMPHSSPQNRPNYNVSFSAMPGGQNERGKGSSNLEGKQKAADFEDLLSGQGFNAHKDKKGPRTIAEMRKEEMAKEMDPEKLKILEWIEGKERNIRALLSTMHTVLWAGETKWKPVGMADLVTPEQVKKVYRKAVLVVHPDKATGQPYEQYAKMIFMELNDAWSEFENQGQKPLY.

Met-1 is subject to N-acetylmethionine. Tandem repeats lie at residues 36 to 39 (NLKD), 40 to 43 (NLKD), and 44 to 47 (TLKD). Residues 36–47 (NLKDNLKDTLKD) form a 3 X 4 AA approximate tandem repeats region. A Phosphatase tensin-type domain is found at 55–222 (SVTSYTKGDL…GYMCDLLADK (168 aa)). Phosphoserine is present on Ser-112. Cys-164 functions as the Phosphocysteine intermediate in the catalytic mechanism. A C2 tensin-type domain is found at 228-366 (FKPLTIKSIT…FQVTLDVELQ (139 aa)). The SH3-binding signature appears at 409–417 (PIDIPPDNP). Residues 451–776 (QESEQSDDEL…GKGSSNLEGK (326 aa)) are disordered. Ser-453 and Ser-456 each carry phosphoserine. Positions 506 to 523 (AMSNSFSPPAAPPTNSEL) are enriched in polar residues. Residues 554 to 572 (ASTQSTPRRSATSTSASPT) are compositionally biased toward low complexity. Residues Ser-563 and Ser-570 each carry the phosphoserine modification. Polar residues predominate over residues 599–629 (FLNTSSASSDPFLQPTRSPSPTVHASSTPAV). Residues 654-669 (SAATSPTGSSHGTPTH) are compositionally biased toward low complexity. Residues 849–913 (TKWKPVGMAD…FENQGQKPLY (65 aa)) form the J domain.

As to quaternary structure, forms a complex composed of HSPA8, CLTC and DNAJC6. Interacts with HSPA8/HSC70 in an ATP-dependent manner; this interaction stimulates the HSPA8's ATPase activity. Interacts with CLTC; this interaction produces a local change in heavy-chain contacts, creating a detectable global distortion of the clathrin coat. Interacts with AP2A2. Interacts with DNM1(GTP-bound form); this interaction allows clathrin-coated vesicle (CCV) formation at the plasma membrane. Post-translationally, phosphorylation at Ser-570 modulates its ability to bind CLTC and therefore the synaptic vesicle endocytosis (SVE). The N-terminus is blocked. In terms of tissue distribution, expressed in various brain regions, including cerebellum, corpus callosum, cortex, striatum, brainstem, pons, putamen, spinal cord and substantia nigra. Very low expression in non-neural tissues such as leukocytes, liver, adipose tissue, skeletal muscle and bone marrow.

It localises to the cytoplasmic vesicle. The protein localises to the clathrin-coated vesicle. In terms of biological role, may act as a protein phosphatase and/or a lipid phosphatase. Co-chaperone that recruits HSPA8/HSC70 to clathrin-coated vesicles (CCVs) and promotes the ATP-dependent dissociation of clathrin from CCVs and participates in clathrin-mediated endocytosis of synaptic vesicles and their recycling and also in intracellular trafficking. Firstly, binds tightly to the clathrin cages, at a ratio of one DNAJC6 per clathrin triskelion. The HSPA8:ATP complex then binds to the clathrin-auxilin cage, initially at a ratio of one HSPA8 per triskelion leading to ATP hydrolysis stimulation and causing a conformational change in the HSPA8. This cycle is repeated three times to drive to a complex containing the clathrin-auxilin cage associated to three HSPA8:ADP complex. The ATP hydrolysis of the third HSPA8:ATP complex leads to a concerted dismantling of the cage into component triskelia. Then, dissociates from the released triskelia and be recycled to initiate another cycle of HSPA8's recruitment. Also acts during the early steps of clathrin-coated vesicle (CCV) formation through its interaction with the GTP bound form of DNM1. This chain is Auxilin, found in Homo sapiens (Human).